We begin with the raw amino-acid sequence, 156 residues long: Low molecular weight protein-tyrosine-phosphatase YfkJ (156 aa).

C8 functions as the Nucleophile in the catalytic mechanism. Residue R14 is part of the active site. D125 serves as the catalytic Proton donor.

It belongs to the low molecular weight phosphotyrosine protein phosphatase family.

The enzyme catalyses O-phospho-L-tyrosyl-[protein] + H2O = L-tyrosyl-[protein] + phosphate. Its activity is regulated as follows. Efficiently inhibited by Cu(2+) ion, Zn(2+) ion and N-ethylmaleimide, while the addition of Mg(2+), Ca(2+) or Fe(3+) ions has minimal effect. Inhibited in a competitive manner by vanadate. Its function is as follows. Dephosphorylates the phosphotyrosine-containing proteins. Involved in ethanol stress resistance. The polypeptide is Low molecular weight protein-tyrosine-phosphatase YfkJ (yfkJ) (Bacillus subtilis (strain 168)).